A 282-amino-acid polypeptide reads, in one-letter code: Bifunctional protein FolD (282 aa).

NADP(+)-binding positions include 166-168 (GAS) and Ile232.

The protein belongs to the tetrahydrofolate dehydrogenase/cyclohydrolase family. Homodimer.

The catalysed reaction is (6R)-5,10-methylene-5,6,7,8-tetrahydrofolate + NADP(+) = (6R)-5,10-methenyltetrahydrofolate + NADPH. It catalyses the reaction (6R)-5,10-methenyltetrahydrofolate + H2O = (6R)-10-formyltetrahydrofolate + H(+). The protein operates within one-carbon metabolism; tetrahydrofolate interconversion. Functionally, catalyzes the oxidation of 5,10-methylenetetrahydrofolate to 5,10-methenyltetrahydrofolate and then the hydrolysis of 5,10-methenyltetrahydrofolate to 10-formyltetrahydrofolate. The chain is Bifunctional protein FolD from Haemophilus influenzae (strain PittGG).